Reading from the N-terminus, the 492-residue chain is Cytoplasmic dynein 1 light intermediate chain 2 (492 aa).

Residue 61-68 (GEDGSGKT) coordinates ATP. 3 disordered regions span residues 187–206 (PEEGCQGSPQRRGPLTSGSD), 371–423 (AKQP…KNNA), and 437–492 (LSKK…ENEA). Ser-194 carries the post-translational modification Phosphoserine. A compositionally biased stretch (polar residues) spans 371-381 (AKQPATPTRAS). Residues Ser-383 and Ser-391 each carry the phosphoserine modification. Position 397 is an omega-N-methylarginine (Arg-397). Thr-441 bears the Phosphothreonine mark. Ser-443 and Ser-446 each carry phosphoserine. Residues 452–469 (VQSTAKKSGQKTVLSNVQ) show a composition bias toward polar residues. Residues 471-480 (ELDRMTRKPD) show a composition bias toward basic and acidic residues. The segment covering 482–492 (MVTNSSTENEA) has biased composition (polar residues).

It belongs to the dynein light intermediate chain family. Homodimer. The cytoplasmic dynein 1 complex consists of two catalytic heavy chains (HCs) and a number of non-catalytic subunits presented by intermediate chains (ICs), light intermediate chains (LICs) and light chains (LCs); the composition seems to vary in respect to the IC, LIC and LC composition. The heavy chain homodimer serves as a scaffold for the probable homodimeric assembly of the respective non-catalytic subunits. The ICs and LICs bind directly to the HC dimer and the LCs assemble on the IC dimer. Interacts with DYNC1H1; DYNC1LI1 and DYNC1LI2 bind mutually exclusive to DYNC1H.

It is found in the cytoplasm. It localises to the cytoskeleton. Acts as one of several non-catalytic accessory components of the cytoplasmic dynein 1 complex that are thought to be involved in linking dynein to cargos and to adapter proteins that regulate dynein function. Cytoplasmic dynein 1 acts as a motor for the intracellular retrograde motility of vesicles and organelles along microtubules. May play a role in binding dynein to membranous organelles or chromosomes. This chain is Cytoplasmic dynein 1 light intermediate chain 2 (DYNC1LI2), found in Pongo abelii (Sumatran orangutan).